Consider the following 520-residue polypeptide: GMP synthase [glutamine-hydrolyzing] (520 aa).

The Glutamine amidotransferase type-1 domain maps to 3–200 (AIAIIDFGSQ…FLDIANCKRD (198 aa)). The active-site Nucleophile is Cys84. Active-site residues include His175 and Glu177. In terms of domain architecture, GMPS ATP-PPase spans 201-386 (WTMKSIIEKQ…IGLSNEIIFQ (186 aa)). Residue 228 to 234 (SGGVDSS) participates in ATP binding.

As to quaternary structure, homodimer.

The catalysed reaction is XMP + L-glutamine + ATP + H2O = GMP + L-glutamate + AMP + diphosphate + 2 H(+). The protein operates within purine metabolism; GMP biosynthesis; GMP from XMP (L-Gln route): step 1/1. In terms of biological role, catalyzes the synthesis of GMP from XMP. The protein is GMP synthase [glutamine-hydrolyzing] of Wolbachia sp. subsp. Brugia malayi (strain TRS).